We begin with the raw amino-acid sequence, 388 residues long: Succinate--CoA ligase [ADP-forming] subunit beta (388 aa).

The 236-residue stretch at 9-244 folds into the ATP-grasp domain; it reads KQLFAEFGLP…PSQEDEREAH (236 aa). ATP is bound by residues Lys-46, 53-55, Glu-99, Ser-102, and Glu-107; that span reads GRG. The Mg(2+) site is built by Asn-199 and Asp-213. Substrate is bound by residues Asn-264 and 321–323; that span reads GIV.

It belongs to the succinate/malate CoA ligase beta subunit family. As to quaternary structure, heterotetramer of two alpha and two beta subunits. It depends on Mg(2+) as a cofactor.

The enzyme catalyses succinate + ATP + CoA = succinyl-CoA + ADP + phosphate. The catalysed reaction is GTP + succinate + CoA = succinyl-CoA + GDP + phosphate. It participates in carbohydrate metabolism; tricarboxylic acid cycle; succinate from succinyl-CoA (ligase route): step 1/1. In terms of biological role, succinyl-CoA synthetase functions in the citric acid cycle (TCA), coupling the hydrolysis of succinyl-CoA to the synthesis of either ATP or GTP and thus represents the only step of substrate-level phosphorylation in the TCA. The beta subunit provides nucleotide specificity of the enzyme and binds the substrate succinate, while the binding sites for coenzyme A and phosphate are found in the alpha subunit. This Vibrio atlanticus (strain LGP32) (Vibrio splendidus (strain Mel32)) protein is Succinate--CoA ligase [ADP-forming] subunit beta.